The following is a 93-amino-acid chain: Putative defensin-like protein 190 (93 aa).

The N-terminal stretch at 1 to 30 (MKMAKAAATNDFGFITCLVIFLVLAGISNG) is a signal peptide. Intrachain disulfides connect C39–C89, C55–C75, C60–C84, and C64–C86.

The protein belongs to the DEFL family.

Its subcellular location is the secreted. This is Putative defensin-like protein 190 from Arabidopsis thaliana (Mouse-ear cress).